The following is a 237-amino-acid chain: Ribonuclease PH (237 aa).

Residues Arg86 and 124–126 (GTR) each bind phosphate.

Belongs to the RNase PH family. In terms of assembly, homohexameric ring arranged as a trimer of dimers.

It carries out the reaction tRNA(n+1) + phosphate = tRNA(n) + a ribonucleoside 5'-diphosphate. Phosphorolytic 3'-5' exoribonuclease that plays an important role in tRNA 3'-end maturation. Removes nucleotide residues following the 3'-CCA terminus of tRNAs; can also add nucleotides to the ends of RNA molecules by using nucleoside diphosphates as substrates, but this may not be physiologically important. Probably plays a role in initiation of 16S rRNA degradation (leading to ribosome degradation) during starvation. In Methylorubrum extorquens (strain CM4 / NCIMB 13688) (Methylobacterium extorquens), this protein is Ribonuclease PH.